The sequence spans 244 residues: Large ribosomal subunit protein uL30B (244 aa).

Polar residues predominate over residues Met-1–Ser-11. The segment at Met-1–Lys-21 is disordered.

It belongs to the universal ribosomal protein uL30 family. As to quaternary structure, component of the large ribosomal subunit (LSU). Mature yeast ribosomes consist of a small (40S) and a large (60S) subunit. The 40S small subunit contains 1 molecule of ribosomal RNA (18S rRNA) and 33 different proteins (encoded by 57 genes). The large 60S subunit contains 3 rRNA molecules (25S, 5.8S and 5S rRNA) and 46 different proteins (encoded by 81 genes).

It is found in the cytoplasm. In terms of biological role, component of the ribosome, a large ribonucleoprotein complex responsible for the synthesis of proteins in the cell. The small ribosomal subunit (SSU) binds messenger RNAs (mRNAs) and translates the encoded message by selecting cognate aminoacyl-transfer RNA (tRNA) molecules. The large subunit (LSU) contains the ribosomal catalytic site termed the peptidyl transferase center (PTC), which catalyzes the formation of peptide bonds, thereby polymerizing the amino acids delivered by tRNAs into a polypeptide chain. The nascent polypeptides leave the ribosome through a tunnel in the LSU and interact with protein factors that function in enzymatic processing, targeting, and the membrane insertion of nascent chains at the exit of the ribosomal tunnel. The protein is Large ribosomal subunit protein uL30B of Saccharomyces cerevisiae (strain ATCC 204508 / S288c) (Baker's yeast).